The primary structure comprises 334 residues: N-acetyl-gamma-glutamyl-phosphate reductase (334 aa).

Cysteine 154 is a catalytic residue.

This sequence belongs to the NAGSA dehydrogenase family. Type 1 subfamily.

It is found in the cytoplasm. It carries out the reaction N-acetyl-L-glutamate 5-semialdehyde + phosphate + NADP(+) = N-acetyl-L-glutamyl 5-phosphate + NADPH + H(+). It functions in the pathway amino-acid biosynthesis; L-arginine biosynthesis; N(2)-acetyl-L-ornithine from L-glutamate: step 3/4. Functionally, catalyzes the NADPH-dependent reduction of N-acetyl-5-glutamyl phosphate to yield N-acetyl-L-glutamate 5-semialdehyde. In Shigella flexneri, this protein is N-acetyl-gamma-glutamyl-phosphate reductase.